The following is a 198-amino-acid chain: Recombination protein RecR (198 aa).

The C4-type zinc finger occupies C57–C72. The Toprim domain occupies S80–S175.

Belongs to the RecR family.

Functionally, may play a role in DNA repair. It seems to be involved in an RecBC-independent recombinational process of DNA repair. It may act with RecF and RecO. This chain is Recombination protein RecR, found in Staphylococcus aureus (strain MRSA252).